A 187-amino-acid chain; its full sequence is Peptidyl-tRNA hydrolase (187 aa).

His14 is a tRNA binding site. His19 (proton acceptor) is an active-site residue. Residues Tyr62, Asn64, and Asn110 each contribute to the tRNA site.

The protein belongs to the PTH family. In terms of assembly, monomer.

It is found in the cytoplasm. It catalyses the reaction an N-acyl-L-alpha-aminoacyl-tRNA + H2O = an N-acyl-L-amino acid + a tRNA + H(+). Functionally, hydrolyzes ribosome-free peptidyl-tRNAs (with 1 or more amino acids incorporated), which drop off the ribosome during protein synthesis, or as a result of ribosome stalling. Its function is as follows. Catalyzes the release of premature peptidyl moieties from peptidyl-tRNA molecules trapped in stalled 50S ribosomal subunits, and thus maintains levels of free tRNAs and 50S ribosomes. The protein is Peptidyl-tRNA hydrolase of Chlorobaculum tepidum (strain ATCC 49652 / DSM 12025 / NBRC 103806 / TLS) (Chlorobium tepidum).